The following is a 373-amino-acid chain: Sorting nexin-21 (373 aa).

A disordered region spans residues 1–107 (MHRGTQEGAM…RSPPPDGQWG (107 aa)). Low complexity predominate over residues 21–37 (ALAGDGPGEAAASPEAE). The segment covering 55–65 (SRLSGTLSFTS) has biased composition (polar residues). The segment covering 66-81 (AEDDEDDEDEDDEEAG) has biased composition (acidic residues). The 118-residue stretch at 129 to 246 (QRLLFEVTSA…DFFVLPELRR (118 aa)) folds into the PX domain. A 1,2-diacyl-sn-glycero-3-phospho-(1D-myo-inositol-3-phosphate) is bound by residues R171, S173, K198, and R212.

The protein belongs to the sorting nexin family. Monomer. In terms of tissue distribution, highly expressed in fetus liver, but only weakly expressed in brain, skeleton muscle, smooth muscle, and cardiac muscle, kidney, and adrenal gland.

It is found in the cytoplasmic vesicle membrane. The protein localises to the early endosome membrane. Binds to membranes enriched in phosphatidylinositol 3-phosphate (PtdIns(P3)) and phosphatidylinositol 4,5-bisphosphate. May be involved in several stages of intracellular trafficking. The polypeptide is Sorting nexin-21 (SNX21) (Homo sapiens (Human)).